A 701-amino-acid polypeptide reads, in one-letter code: Polyribonucleotide nucleotidyltransferase (701 aa).

Residues Asp-485 and Asp-491 each contribute to the Mg(2+) site. One can recognise a KH domain in the interval 552-611 (PRIIKIRINPEKIRDVIGKGGAVIRALTEETGTTIDITDDGTVMIACVNAEGGELAKKRI). In terms of domain architecture, S1 motif spans 621–689 (GRVYDGTVLK…DKGRLRLSMK (69 aa)).

The protein belongs to the polyribonucleotide nucleotidyltransferase family. The cofactor is Mg(2+).

It is found in the cytoplasm. The catalysed reaction is RNA(n+1) + phosphate = RNA(n) + a ribonucleoside 5'-diphosphate. Involved in mRNA degradation. Catalyzes the phosphorolysis of single-stranded polyribonucleotides processively in the 3'- to 5'-direction. The polypeptide is Polyribonucleotide nucleotidyltransferase (Nitrosospira multiformis (strain ATCC 25196 / NCIMB 11849 / C 71)).